The sequence spans 152 residues: MYSILIACLVLLLCLVIYVGHRADHARKYLEGMWHGDPVFLKQSGLQSFYLYIQPGHTCFFSIVNKNGEKLMETKIPCTITNKIYMFFKPIFEFHVVMEDIHRYLPKQFNFLLDSAEGKLILENNHVIYAVLYKDNFATALGKTVEKYITQN.

The first 23 residues, 1 to 23 (MYSILIACLVLLLCLVIYVGHRA), serve as a signal peptide directing secretion.

This sequence belongs to the asfivirus EP152R family.

The protein localises to the virion. This is an uncharacterized protein from Ornithodoros (relapsing fever ticks).